Reading from the N-terminus, the 436-residue chain is GTPase Der (436 aa).

EngA-type G domains are found at residues 4 to 167 (PTIA…PEQQ) and 176 to 351 (IKFS…ENHR). GTP-binding positions include 10–17 (GRANVGKS), 57–61 (DTGGI), 119–122 (NKID), 182–189 (GRPNVGKS), 229–233 (DTAGM), and 294–297 (NKWD). The KH-like domain maps to 352 to 436 (KRVQSSTLNE…PLHLIARKRN (85 aa)).

Belongs to the TRAFAC class TrmE-Era-EngA-EngB-Septin-like GTPase superfamily. EngA (Der) GTPase family. In terms of assembly, associates with the 50S ribosomal subunit.

Functionally, GTPase that plays an essential role in the late steps of ribosome biogenesis. The chain is GTPase Der from Macrococcus caseolyticus (strain JCSC5402) (Macrococcoides caseolyticum).